Reading from the N-terminus, the 37-residue chain is Esculentin-2B (37 aa).

C31 and C37 are disulfide-bonded.

Expressed by the skin glands.

It is found in the secreted. Functionally, antibacterial activity against Gram-positive bacterium S.aureus and Gram-negative bacterium E.coli. Has activity against C.albicans. This chain is Esculentin-2B, found in Lithobates berlandieri (Rio Grande leopard frog).